The sequence spans 995 residues: UPF0182 protein MUL_2505 (995 aa).

The next 7 helical transmembrane spans lie at 18–38 (VLILIALGVIALLLAGPRLID), 63–83 (FLVFLVAGVLVGGIVFAGLAL), 113–133 (LFGIGIPAAIGLLAGIVAQSY), 175–195 (FVAIFLAFVANVVSHYLFGGI), 210–230 (IQLVSLVGVLVLLKTVAYWLN), 259–279 (KLILMAIAVICAAAVFSAIVL), and 287–307 (IGLVLLLLSSLIVGAAWPMIV). The interval 900 to 947 (AATGIQPTEGGAPANVPPNNAPSPEALPGTPPSPPTAVPPAPEASVTL) is disordered. Positions 928–941 (GTPPSPPTAVPPAP) are enriched in pro residues.

This sequence belongs to the UPF0182 family.

It localises to the cell membrane. In Mycobacterium ulcerans (strain Agy99), this protein is UPF0182 protein MUL_2505.